Reading from the N-terminus, the 260-residue chain is Snake venom serine protease gussurobin (260 aa).

The first 18 residues, 1 to 18 (MVLIRVLANLLILQLSYA), serve as a signal peptide directing secretion. A propeptide spanning residues 19–24 (QKSSEL) is cleaved from the precursor. The Peptidase S1 domain maps to 25-251 (IIGGDECNIN…YTEWIQSTIA (227 aa)). 6 cysteine pairs are disulfide-bonded: Cys31/Cys165, Cys52/Cys68, Cys100/Cys258, Cys144/Cys212, Cys176/Cys191, and Cys202/Cys227. Catalysis depends on charge relay system residues His67 and Asp112. 2 N-linked (GlcNAc...) asparagine glycosylation sites follow: Asn123 and Asn124. Residue Ser206 is the Charge relay system of the active site.

Belongs to the peptidase S1 family. Snake venom subfamily. As to quaternary structure, monomer. In terms of tissue distribution, expressed by the venom gland.

The protein resides in the secreted. In terms of biological role, snake venom serine protease that may act in the hemostasis system of the prey. The chain is Snake venom serine protease gussurobin from Gloydius ussuriensis (Ussuri mamushi).